Here is a 361-residue protein sequence, read N- to C-terminus: Phosphate acyltransferase (361 aa).

The protein belongs to the PlsX family. Homodimer. Probably interacts with PlsY.

It localises to the cytoplasm. The catalysed reaction is a fatty acyl-[ACP] + phosphate = an acyl phosphate + holo-[ACP]. It participates in lipid metabolism; phospholipid metabolism. Catalyzes the reversible formation of acyl-phosphate (acyl-PO(4)) from acyl-[acyl-carrier-protein] (acyl-ACP). This enzyme utilizes acyl-ACP as fatty acyl donor, but not acyl-CoA. This Parvibaculum lavamentivorans (strain DS-1 / DSM 13023 / NCIMB 13966) protein is Phosphate acyltransferase.